A 20-amino-acid polypeptide reads, in one-letter code: Short cationic peptide-4a (20 aa).

Glutamic acid 1-amide is present on Glu-20.

As to expression, expressed by the venom gland.

Its subcellular location is the secreted. The protein is Short cationic peptide-4a of Cupiennius salei (American wandering spider).